The primary structure comprises 491 residues: Serine/threonine-protein phosphatase 2A regulatory subunit B'' subunit delta (491 aa).

One can recognise an EF-hand domain in the interval 331–366; that stretch reads TTPTSTEYWFRCMDLDGDGALSMFELEFFYEEQAQR. Residues Asp-344, Asp-346, Asp-348, and Glu-355 each coordinate Ca(2+). 2 stretches are compositionally biased toward acidic residues: residues 460-473 and 481-491; these read AMAE…EGSD and ADEDCDDLEPL. Residues 460–491 are disordered; sequence AMAEDDDDHDEGSDPIDLYGLADEDCDDLEPL.

In terms of assembly, PP2A consists of a common heterodimeric core enzyme, composed of a 36 kDa catalytic subunit (subunit C) and a 65 kDa constant regulatory subunit (PR65 or subunit A), that associates with a variety of regulatory subunits. Proteins that associate with the core dimer include three families of regulatory subunits B (the R2/B/PR55/B55, R3/B''/PR72/PR130/PR59 and R5/B'/B56 families), the 48 kDa variable regulatory subunit, viral proteins, and cell signaling molecules. Expressed in testis, kidney, liver, lung, spleen, brain and heart.

In terms of biological role, the B regulatory subunit might modulate substrate selectivity and catalytic activity, and might also direct the localization of the catalytic enzyme to a particular subcellular compartment. Interacts with retinoblastoma-related protein p107 (in vivo). May target PP2A core dimer to p107 resulting in dephosphorylation of p107. This Mus musculus (Mouse) protein is Serine/threonine-protein phosphatase 2A regulatory subunit B'' subunit delta (Ppp2r3d).